The chain runs to 175 residues: MMMYIVFILSIIFVISFVGVSSKPSPIYGGLGLIVGGGVGCGVILSFGGSFLGLMVFLIYLGGMLVVFGYTTAMATEQYPEVWVSNKVVLGAFVLGLVVEFLIVIYALKSGEVKIMFEFDGLGDWVVYDTGGSGVFSEEATGIAALYSYGVWLVIVTGWSLFISVVIIMEITRGS.

5 helical membrane-spanning segments follow: residues 1–21, 25–45, 47–67, 88–108, and 149–169; these read MMMY…VGVS, SPIY…GVIL, FGGS…MLVV, VVLG…IYAL, and YGVW…VIIM.

This sequence belongs to the complex I subunit 6 family. As to quaternary structure, core subunit of respiratory chain NADH dehydrogenase (Complex I) which is composed of 45 different subunits.

The protein resides in the mitochondrion inner membrane. It carries out the reaction a ubiquinone + NADH + 5 H(+)(in) = a ubiquinol + NAD(+) + 4 H(+)(out). In terms of biological role, core subunit of the mitochondrial membrane respiratory chain NADH dehydrogenase (Complex I) which catalyzes electron transfer from NADH through the respiratory chain, using ubiquinone as an electron acceptor. Essential for the catalytic activity and assembly of complex I. This is NADH-ubiquinone oxidoreductase chain 6 (MT-ND6) from Balaenoptera physalus (Fin whale).